We begin with the raw amino-acid sequence, 126 residues long: MMIYWIFLGLAIVAEIIGTLSMKYASVSGELTGHIVMYFMITGSYIMLALAVKKVALGVAYALWEGIGILIITVFSVLWFDESLSPLKIAGLVTLVGGIMLVKSGTRKPKKPNSPNRNSGEHHATA.

Helical transmembrane passes span 1-21, 32-52, 55-75, and 82-102; these read MMIY…GTLS, TGHI…ALAV, VALG…ITVF, and ESLS…IMLV. The disordered stretch occupies residues 104–126; the sequence is SGTRKPKKPNSPNRNSGEHHATA.

It belongs to the drug/metabolite transporter (DMT) superfamily. Small multidrug resistance (SMR) (TC 2.A.7.1) family. MdtJ subfamily. As to quaternary structure, forms a complex with MdtI.

The protein resides in the cell inner membrane. Catalyzes the excretion of spermidine. This is Spermidine export protein MdtJ from Yersinia enterocolitica serotype O:8 / biotype 1B (strain NCTC 13174 / 8081).